The sequence spans 896 residues: MAARAVLDEFTAPAEKAELLEQSRGRIEGLFGVSLAVLGALGAEEPLPARIWLQLCGAQEAVHSAKEYIKGICEPELEERECYPKDMHCIFVGAESLFLKSLIQDTCADLCILDIGLLGIRGSAEAVVMARSHIQQFVKLFENKENLPSSQKESEVKREFKQFVEAHADNYTMDLLILPTSLKKELLTLTQGEENLFETGDDEVIEMRDSQQTEFTQNAATGLNISRDETVLQEEARNKAGTPVSELTKQMDTVLSSSPDVLFDPINGLTPDEEALSNERICQKRRFSDSEERHTKKQFSLENVQEGEILHDAKTLAGNVIADLSDSSADSENLSPDIKETTEEMEYNILVNFFKTMGYSQEIVEKVIKVYGPSTEPLLLLEEIEKENKRFQEDREFSAGTVYPETNKTKNKGVYSSTNELTTDSTPKKTQAHTQQNMVEKFSQLPFKVEAKPCTSNCRINTFRTVPIEQKHEVWGSNQNYICNTDPETDGLSPSVASPSPKEVNFVSRGASSHQPRVPLFPENGLHQQPEPLLPNNMKSACEKRLGCCSSPHSKPNCSTLSPPMPLPQLLPSVTDARSAGPSDHIDSSVTGVQRFRDTLKIPYKLELKNEPGRTDLKHIVIDGSNVAITHGLKKFFSCRGIAIAVEYFWKLGNRNITVFVPQWRTRRDPNVTEQHFLTQLQELGILSLTPARMVFGERIASHDDRFLLHLADKTGGIIVTNDNFREFVNESVSWREIITKRLLQYTFVGDIFMVPDDPLGRSGPRLEEFLQKEVCLRDMQPLLSALPNVGMFDPSFRVPGTQAASTSHQPPTRIQGAPSSHWLPQQPHFPLLPALPSLQQNLPMPAQRSSAETNELREALLKIFPDSEQRLKIDQILVAHPYMKDLNALSAMVLD.

Residues 59 to 143 (QEAVHSAKEY…IQQFVKLFEN (85 aa)) enclose the KH-like domain. A Phosphoserine modification is found at serine 226. Threonine 242 carries the phosphothreonine modification. Residues serine 258 and serine 300 each carry the phosphoserine modification. Disordered regions lie at residues 403–430 (YPET…PKKT) and 488–507 (ETDG…VNFV). Polar residues predominate over residues 414–430 (VYSSTNELTTDSTPKKT). Residue serine 562 is modified to Phosphoserine. The region spanning 617–769 (LKHIVIDGSN…LGRSGPRLEE (153 aa)) is the RNase NYN domain. Positions 801-821 (GTQAASTSHQPPTRIQGAPSS) are disordered. Residues 803–813 (QAASTSHQPPT) are compositionally biased toward polar residues. The interval 849–896 (RSSAETNELREALLKIFPDSEQRLKIDQILVAHPYMKDLNALSAMVLD) is coCUN.

The protein belongs to the N4BP1 family. In terms of assembly, interacts with NEDD4. Interacts with ITCH (via WW domain 2). Post-translationally, proteolytically cleaved by CASP8 downstream of TLR3 or TLR4, leading to its inactivation. Mainly cleaved at Asp-490 by CASP8. Cleaved by caspase-like protein MALT1 in T-cells following TCR-mediated activation, leading to its inactivation and subsequent viral reactivation during HIV-1 infection. Mono- and polyubiquitinated on the CoCUN region. Monoubiquitinated by NEDD4. Polyubiquitinated, leading to its degradation by the proteasome. Sumoylated with SUMO1, abrogating polyubiquitination and subsequent degradation. Desumoylated by SENP1, leading to accumulation in PML nuclear bodies. As to expression, detected in heart, lung, brain, liver, skeletal muscle, pancreas, kidney, spleen, testis and ovary.

It is found in the cytoplasm. The protein resides in the cytosol. It localises to the nucleus. Its subcellular location is the nucleolus. The protein localises to the PML body. Proteolytic cleavage by CASP8 or MALT1 leads to its inactivation. Potent suppressor of cytokine production that acts as a regulator of innate immune signaling and inflammation. Acts as a key negative regulator of select cytokine and chemokine responses elicited by TRIF-independent Toll-like receptors (TLRs), thereby limiting inflammatory cytokine responses to minor insults. In response to more threatening pathogens, cleaved by CASP8 downstream of TLR3 or TLR4, leading to its inactivation, thereby allowing production of inflammatory cytokines. Acts as a restriction factor against some viruses, such as HIV-1: restricts HIV-1 replication by binding to HIV-1 mRNAs and mediating their degradation via its ribonuclease activity. Also acts as an inhibitor of the E3 ubiquitin-protein ligase ITCH: acts by interacting with the second WW domain of ITCH, leading to compete with ITCH's substrates and impairing ubiquitination of substrates. The polypeptide is NEDD4-binding protein 1 (Homo sapiens (Human)).